Reading from the N-terminus, the 386-residue chain is Acyl-lipid omega-3 desaturase (cytochrome b5), endoplasmic reticulum (386 aa).

The disordered stretch occupies residues 1–30 (MVVAMDQRTNVNGDPGAGDRKKEERFDPSA). Residues 17–27 (AGDRKKEERFD) are compositionally biased toward basic and acidic residues. The chain crosses the membrane as a helical span at residues 63–83 (IIAVAALAIAAVYVDSWFLWP). The short motif at 101 to 105 (HDCGH) is the Histidine box-1 element. Positions 137 to 141 (HRTHH) match the Histidine box-2 motif. A run of 2 helical transmembrane segments spans residues 220-240 (WSIMFVSLIALSFVFGPLAVL) and 242-262 (VYGVPYIIFVMWLDAVTYLHH). A Histidine box-3 motif is present at residues 304–308 (HVIHH).

Belongs to the fatty acid desaturase type 1 family. As to expression, abundant in leaves and seedlings. Barely detectable in root tissue.

It localises to the endoplasmic reticulum membrane. It catalyses the reaction a (9Z,12Z)-octadecadienoyl-containing glycerolipid + 2 Fe(II)-[cytochrome b5] + O2 + 2 H(+) = (9Z,12Z,15Z)-octadecatrienoyl-containing glycerolipid + 2 Fe(III)-[cytochrome b5] + 2 H2O. The protein operates within lipid metabolism; polyunsaturated fatty acid biosynthesis. Functionally, microsomal (ER) omega-3 fatty acid desaturase introduces the third double bond in the biosynthesis of 18:3 fatty acids, important constituents of plant membranes. It is thought to use cytochrome b5 as an electron donor and to act on fatty acids esterified to phosphatidylcholine and, possibly, other phospholipids. The protein is Acyl-lipid omega-3 desaturase (cytochrome b5), endoplasmic reticulum of Arabidopsis thaliana (Mouse-ear cress).